We begin with the raw amino-acid sequence, 597 residues long: Probable translation initiation factor IF-2 (597 aa).

Positions 10–226 (LRTPIVAVLG…LMGLSQRFMK (217 aa)) constitute a tr-type G domain. A G1 region spans residues 19 to 26 (GHVDHGKT). 19–26 (GHVDHGKT) is a GTP binding site. Residues 44 to 48 (AITQH) are G2. Residues 81–84 (DTPG) are G3. Residues 81 to 85 (DTPGH) and 135 to 138 (NKVD) each bind GTP. A G4 region spans residues 135–138 (NKVD). A G5 region spans residues 203 to 205 (SAI).

This sequence belongs to the TRAFAC class translation factor GTPase superfamily. Classic translation factor GTPase family. IF-2 subfamily.

Function in general translation initiation by promoting the binding of the formylmethionine-tRNA to ribosomes. Seems to function along with eIF-2. This chain is Probable translation initiation factor IF-2, found in Halorubrum lacusprofundi (strain ATCC 49239 / DSM 5036 / JCM 8891 / ACAM 34).